Here is a 76-residue protein sequence, read N- to C-terminus: Waprin-Rha1 (76 aa).

An N-terminal signal peptide occupies residues 1–24 (MQARVFLLLLGVILLGMMGPMVSA). The WAP domain maps to 25-75 (QDGKAGSCPDVNQPIPPLGVCKTTCATDSNCPDIQKCCKNGCGHMSCTRPS). Disulfide bonds link cysteine 32–cysteine 62, cysteine 45–cysteine 66, cysteine 49–cysteine 61, and cysteine 55–cysteine 71.

The protein belongs to the venom waprin family. As to expression, expressed by the venom gland.

Its subcellular location is the secreted. In terms of biological role, damages membranes of susceptible bacteria. Has no hemolytic activity. Not toxic to mice. Does not inhibit the proteinases elastase and cathepsin G. The chain is Waprin-Rha1 from Rhabdophis tigrinus tigrinus (Tiger keelback snake).